Here is a 64-residue protein sequence, read N- to C-terminus: UPF0370 protein YPA_2246 (64 aa).

Residues 3–23 traverse the membrane as a helical segment; the sequence is WLADYWWIILILLVGMILNGI. The span at 36–47 shows a compositional bias: basic and acidic residues; it reads DNKPELPPHRDN. Residues 36 to 64 form a disordered region; that stretch reads DNKPELPPHRDNNAQWDDEDDWPDQNKKK.

The protein belongs to the UPF0370 family.

It localises to the cell membrane. This chain is UPF0370 protein YPA_2246, found in Yersinia pestis bv. Antiqua (strain Antiqua).